A 199-amino-acid polypeptide reads, in one-letter code: CASP-like protein 4C1 (199 aa).

Residues 1-35 (MESGSVANDSGPLNSTPDVHLYGKTAAMKQRRSNT) are Cytoplasmic-facing. A helical transmembrane segment spans residues 36-56 (MLFVFRLLTFSFSLAAVLVMG). The Extracellular segment spans residues 57 to 80 (TNKQKIRSAPQYLEVAWHDFDPFR). A helical membrane pass occupies residues 81-101 (YVFAVNAIICVYSFVETWLAV). At 102-124 (YTLSRGTLLLPETFQVWFDYGHD) the chain is on the cytoplasmic side. The chain crosses the membrane as a helical span at residues 125-145 (QGFACLLFSANSVGIAMAQLL). The Extracellular portion of the chain corresponds to 146-169 (QSGSTLIQGQYYCSDAGAYCTQAR). Residues 170 to 190 (VSIAMGFGAFLFLALSSFLTG) traverse the membrane as a helical segment. Topologically, residues 191–199 (LRVARWYLP) are cytoplasmic.

This sequence belongs to the Casparian strip membrane proteins (CASP) family. Homodimer and heterodimers.

It is found in the cell membrane. In Physcomitrium patens (Spreading-leaved earth moss), this protein is CASP-like protein 4C1.